The sequence spans 1237 residues: Tyrosine-protein kinase sid-3 (1237 aa).

Residues 107–369 (IKLYELIGEG…REDLVAAMFL (263 aa)) enclose the Protein kinase domain. Residues 113–121 (IGEGSFAVV) and K139 contribute to the ATP site. The Proton acceptor role is filled by D230. The SH3 domain maps to 366-426 (AMFLDAVARE…PRSVVFAQTN (61 aa)). 6 disordered regions span residues 683–704 (NQGS…GIQN), 741–802 (PPAP…APVQ), 826–919 (IQPQ…EERR), 940–986 (SNST…SEPI), 999–1018 (SATT…PSPP), and 1134–1156 (QQRQ…SAAS). Polar residues-rich tracts occupy residues 749 to 766 (QPVS…TLQK), 778 to 791 (KRPT…SNGF), and 847 to 863 (SAPT…SQAS). Low complexity-rich tracts occupy residues 881-910 (TPIT…TSTT) and 940-961 (SNST…PSTA). Residues 1138 to 1156 (AGSSSRAVPPASASTSAAS) show a composition bias toward low complexity.

This sequence belongs to the protein kinase superfamily. Tyr protein kinase family. SYK/ZAP-70 subfamily. As to expression, ubiquitously present in all tissues tested. Expressed in the somatic cells of gut, pharynx, body wall muscle, neurons, skin and excretory canal cells.

It localises to the cytoplasm. The enzyme catalyses L-tyrosyl-[protein] + ATP = O-phospho-L-tyrosyl-[protein] + ADP + H(+). Functionally, tyrosine-protein kinase which plays a role in RNA-mediated gene silencing by mediating import of double-stranded RNA (dsRNA) into cells. Not required for import of ingested dsRNA into intestinal cells but involved in subsequent export from intestinal cells to internal tissues. This Caenorhabditis elegans protein is Tyrosine-protein kinase sid-3 (sid-3).